Reading from the N-terminus, the 454-residue chain is Isthmin-1 (454 aa).

The N-terminal stretch at 1–29 is a signal peptide; it reads MVRLAAELLLLLGLLLLTLHITVLRGSGA. Disordered regions lie at residues 29-93, 125-144, and 161-209; these read ASDR…PRSF, PDSE…WSLP, and TNSG…STDG. Residues 38 to 55 are compositionally biased toward polar residues; sequence GNNNLNLESDSTSETSFP. Residues 128-137 are compositionally biased toward basic and acidic residues; that stretch reads EAEKDQHPEN. The region spanning 208–252 is the TSP type-1 domain; it reads DGEGDWSLWSVCSVTCGNGNQKRTRSCGYACIATESRTCDRPNCP. Disulfide bonds link Cys-219/Cys-246, Cys-223/Cys-251, and Cys-234/Cys-238. The 164-residue stretch at 279–442 folds into the AMOP domain; the sequence is LFEVDMDSCE…QKCTESPSDE (164 aa).

The protein belongs to the isthmin family. Interacts with integrin ITGAV/ITGB5.

Its subcellular location is the secreted. Acts as an angiogenesis inhibitor. This is Isthmin-1 (Ism1) from Mus musculus (Mouse).